Reading from the N-terminus, the 365-residue chain is tRNA/tmRNA (uracil-C(5))-methyltransferase (365 aa).

The S-adenosyl-L-methionine site is built by glutamine 189, tyrosine 217, asparagine 222, glutamate 238, and aspartate 298. Catalysis depends on cysteine 323, which acts as the Nucleophile. Glutamate 357 (proton acceptor) is an active-site residue.

Belongs to the class I-like SAM-binding methyltransferase superfamily. RNA M5U methyltransferase family. TrmA subfamily.

The enzyme catalyses uridine(54) in tRNA + S-adenosyl-L-methionine = 5-methyluridine(54) in tRNA + S-adenosyl-L-homocysteine + H(+). It catalyses the reaction uridine(341) in tmRNA + S-adenosyl-L-methionine = 5-methyluridine(341) in tmRNA + S-adenosyl-L-homocysteine + H(+). In terms of biological role, dual-specificity methyltransferase that catalyzes the formation of 5-methyluridine at position 54 (m5U54) in all tRNAs, and that of position 341 (m5U341) in tmRNA (transfer-mRNA). The polypeptide is tRNA/tmRNA (uracil-C(5))-methyltransferase (Shewanella pealeana (strain ATCC 700345 / ANG-SQ1)).